Here is a 139-residue protein sequence, read N- to C-terminus: Nucleoside diphosphate kinase (139 aa).

Residues Lys-9, Phe-57, Arg-85, Thr-91, Arg-102, and Asn-112 each contribute to the ATP site. Residue His-115 is the Pros-phosphohistidine intermediate of the active site.

It belongs to the NDK family. In terms of assembly, homotetramer. The cofactor is Mg(2+).

The protein localises to the cytoplasm. The catalysed reaction is a 2'-deoxyribonucleoside 5'-diphosphate + ATP = a 2'-deoxyribonucleoside 5'-triphosphate + ADP. It catalyses the reaction a ribonucleoside 5'-diphosphate + ATP = a ribonucleoside 5'-triphosphate + ADP. In terms of biological role, major role in the synthesis of nucleoside triphosphates other than ATP. The ATP gamma phosphate is transferred to the NDP beta phosphate via a ping-pong mechanism, using a phosphorylated active-site intermediate. In Exiguobacterium sp. (strain ATCC BAA-1283 / AT1b), this protein is Nucleoside diphosphate kinase.